The primary structure comprises 62 residues: Potassium channel toxin gamma-KTx 1.1 (62 aa).

A signal peptide spans 1–20 (MKVLILIMIIASLMIMGVEM). 4 disulfide bridges follow: Cys25/Cys43, Cys31/Cys54, Cys40/Cys59, and Cys44/Cys61.

Belongs to the ergtoxin family. Gamma-KTx 1 subfamily. After protein storage at -20 Celsius degrees during a couple of months, the Met-55 of a small number of toxins is naturally oxidized. This oxidized form is about three orders of magnitude less efficient (IC(50)=15 uM) than non-oxidized form. As to expression, expressed by the venom gland.

It localises to the secreted. Functionally, blocks human and rat Kv11.1/KCNH2/ERG1 and Kv11.3/KCNH7/ERG3, as well as rat (but not human) Kv11.2/KCNH6/ERG2 by binding to channel outer vestibule (S5P domain) with a 1:1 stoichiometry. Inhibition data are the following: hERG1 (reversible, IC(50)~7 nM), rERG1 (reversible, Kd=6.8 nM), rERG2 (irreversible, Kd=2.8 nM), hERG3 (irreversible, Kd=4.05 nM) and rERG3 (reversible, Kd=38.1 nM) potassium channels. The toxin potency is not affected by elevating potassium ion concentration from 2 to 98 mM. This toxin only blocks channels in a closed state. At high toxin concentrations, block of Kv11.1/KCNH2/ERG1 macroscopic current is incomplete (93.5%). This suggests a kinetic mechanism model with two different states of toxin-channel binding (T+C=TC*=TC; in the TC* state, the toxin binds the channel but does not occlude the pore, whereas in the TC state the toxin binds and occludes the pore). In this model, incomplete block is explained by the relatively fast dissociation rate from the blocked channel conformation (TC) relative to the rate of conversion of the toxin-channel encounter complex (TC*) to the blocked channel conformation (TC). The chain is Potassium channel toxin gamma-KTx 1.1 from Centruroides noxius (Mexican scorpion).